A 783-amino-acid chain; its full sequence is Outer membrane usher protein FanD (783 aa).

The N-terminal stretch at 1–23 (MNRKKHQILKILLLCLISSKSSA) is a signal peptide. Cysteines 763 and 782 form a disulfide.

The protein belongs to the fimbrial export usher family.

It localises to the cell outer membrane. In terms of biological role, involved in the export and assembly of K99 fimbrial subunits across the outer membrane. In Escherichia coli, this protein is Outer membrane usher protein FanD (fanD).